The chain runs to 473 residues: MQHGDEMMKKMTGKSFALSALVAASFMAAGAMASDKTEPRNEVYKDKFANQYNSWHDTAKSEEITDALAGDPSLVILWAGYGFAKDYNAPRGHMYAVTDVRNTLRTGAPANAEDGPMPMACWSCKSPDVPRLIEEQGEEGYFKGKWAKGGPEVVNTIGCSDCHEKGTPKLRISRPFAERAMETIGTPFDKASKKDKQSMVCGQCHVEYYFEKKDDRKGFVKFPWDSGTTVEQMEAYYDAIEFSDWTHALSKTPMLKAQHPGYETWKLGVHGKNDVSCVDCHMPKVTNDKGRKYTDHKVGNPFDRFDETCATCHSQSKEFLEGITKERYAKVKELKARAEGQLVKAHFEAAKAWEVGATEAEMKPILTDIRHAQWRWDFAIASHGVAAHAPEEALRILGTAVDKAADARVKLAQLLAKKGVTDAVAIPDISTKAKAQAALGMDMDKMNAEKEAFKKDVLPKWDEEAKKREATYK.

The signal sequence occupies residues 1–33; it reads MQHGDEMMKKMTGKSFALSALVAASFMAAGAMA. Residue histidine 93 coordinates heme c. Heme is bound by residues cysteine 121, cysteine 124, and lysine 125. Heme c is bound by residues cysteine 159, cysteine 162, histidine 163, cysteine 201, cysteine 204, and histidine 205. Ca(2+) contacts are provided by glutamate 207, tyrosine 208, lysine 256, and glutamine 258. Tyrosine 208 serves as a coordination point for substrate. Histidine 259 is a substrate binding site. Heme c-binding residues include histidine 270, cysteine 277, cysteine 280, histidine 281, histidine 296, cysteine 309, cysteine 312, histidine 313, and histidine 388.

It belongs to the cytochrome c-552 family. Ca(2+) serves as cofactor. The cofactor is heme c.

It localises to the periplasm. It carries out the reaction 6 Fe(III)-[cytochrome c] + NH4(+) + 2 H2O = 6 Fe(II)-[cytochrome c] + nitrite + 8 H(+). It functions in the pathway nitrogen metabolism; nitrate reduction (assimilation). In terms of biological role, catalyzes the reduction of nitrite to ammonia, consuming six electrons in the process. In Shewanella sp. (strain ANA-3), this protein is Cytochrome c-552.